The following is a 436-amino-acid chain: MSKALPLVTRHGDRIAIVNGLRTPFAKQATAYHGIPAVDLGKTAVSELLARTGIDPALIEQLVFGQVVQMPEAPNIAREIVLGTGMSVHTDAYSVSRACATSFQAIANVAESIMAGSISIGIAGGADSSSVLPIGVSKALARTLVDVNKARTLSQRLKLFSRLKFRDLMPVPPAVAEYSTGLRMGDTAEQMAKSHGITREEQDALAHRSHQLAAKAWEQGLLHDEVMTAYVPPYRTQISEDNNVRKDSSLASYAKLKPAFDRKHGSVTAANSTPLTDGAAAVLMMSESRAKELGLQPLGYLRSFAFSAIDVWEDMLLGPSYATPLALDRAGIGLADLTLIDMHEAFAAQTLANLKMFASDEFAQQKLGRSRAIGEVDMDKFNVLGGSIAYGHPFAATGARMITQTLHELKRRGGGLGLTTACAAGGLGAAMIVEVE.

Cysteine 99 serves as the catalytic Acyl-thioester intermediate. Residues histidine 392 and cysteine 422 each act as proton acceptor in the active site.

It belongs to the thiolase-like superfamily. Thiolase family. As to quaternary structure, heterotetramer of two alpha chains (FadJ) and two beta chains (FadI).

Its subcellular location is the cytoplasm. The enzyme catalyses an acyl-CoA + acetyl-CoA = a 3-oxoacyl-CoA + CoA. The protein operates within lipid metabolism; fatty acid beta-oxidation. Catalyzes the final step of fatty acid oxidation in which acetyl-CoA is released and the CoA ester of a fatty acid two carbons shorter is formed. The sequence is that of 3-ketoacyl-CoA thiolase from Serratia proteamaculans (strain 568).